The following is a 1023-amino-acid chain: NRPS-like oxidoreductase fscA (1023 aa).

The interval 54-454 is adenylation; the sequence is TYGDLNGMAT…NHPFVRQCMV (401 aa). Positions 554–637 constitute a Carrier domain; the sequence is PEDDVIGRQI…SIANHVRSAQ (84 aa). Residue S596 is modified to O-(pantetheine 4'-phosphoryl)serine. The region spanning 685–901 is the Thioester reductase (TE) domain; sequence LTGGAGYLGQ…VYDESTTRAR (217 aa).

The protein belongs to the NRP synthetase family. Requires pantetheine 4'-phosphate as cofactor.

Its pathway is secondary metabolite biosynthesis. In terms of biological role, NRPS-like oxidoreductasee; part of the fragmented gene cluster that mediates the biosynthesis of fusarochromene, a tryptophan-derived metabolite closely related to a group of mycotoxins including fusarochromanone. Within the pathway, fscA acts as an oxidoreductase that reduces the carboxyl group of 4-hydroxykyrunenine to primary alcohol. The first step of the pathway is the epimerization of L-tryptophan to D-tryptophan in the presence of the NRPS-like tryptophan epimerase fscC. D-tryptophan is subsequently hydroxylated by the tryptophan 6-hydroxylase fscE to yield 6-hydroxytryptophan. The pyrrole ring undergoes cleavaged by the tryptophan 2,3-dioxygenase fscD and is finally converted to 4-hydroxykyrunenine by the hydrolase fscH. The NRPS-like oxidoreductase fscA reduces the carboxyl group to primary alcohol and the DMATS-type prenyltransferase fscG performs prenylation, followed by the formation of a chromene ring catalyzed by the oxidoreductase fscI, which leads to desacetylfusarochromene. Epoxidation by fscF and rearrangement reactions of chromene double bonds convert compound desacetylfusarochromene to fusarochromanones. Although specific acetyltransferases were not found near the fsc gene cluster, several predicted enzymes containing the N-acetyltransferase superfamily domain are present in the genome of F.equiseti. These predicted enzymes may have the potential to convert desacetylfusarochromene to fusarochromene. This Fusarium equiseti (Fusarium scirpi) protein is NRPS-like oxidoreductase fscA.